Consider the following 205-residue polypeptide: Outer-membrane lipoprotein carrier protein (205 aa).

An N-terminal signal peptide occupies residues 1–19 (MKKIIICFIFVFSINVSFA).

It belongs to the LolA family. Monomer.

The protein localises to the periplasm. Its function is as follows. Participates in the translocation of lipoproteins from the inner membrane to the outer membrane. Only forms a complex with a lipoprotein if the residue after the N-terminal Cys is not an aspartate (The Asp acts as a targeting signal to indicate that the lipoprotein should stay in the inner membrane). This chain is Outer-membrane lipoprotein carrier protein, found in Francisella tularensis subsp. holarctica (strain LVS).